The sequence spans 239 residues: Peptidyl-tRNA hydrolase (239 aa).

Y14 serves as a coordination point for tRNA. H19 acts as the Proton acceptor in catalysis. Positions 64, 66, and 112 each coordinate tRNA. Positions 188–225 (GGKPDAEEPQAPKKQVGQSHIHKARNAAQPKKLPATGP) are disordered.

It belongs to the PTH family. Monomer.

It is found in the cytoplasm. The enzyme catalyses an N-acyl-L-alpha-aminoacyl-tRNA + H2O = an N-acyl-L-amino acid + a tRNA + H(+). Its function is as follows. Hydrolyzes ribosome-free peptidyl-tRNAs (with 1 or more amino acids incorporated), which drop off the ribosome during protein synthesis, or as a result of ribosome stalling. Catalyzes the release of premature peptidyl moieties from peptidyl-tRNA molecules trapped in stalled 50S ribosomal subunits, and thus maintains levels of free tRNAs and 50S ribosomes. In Sinorhizobium fredii (strain NBRC 101917 / NGR234), this protein is Peptidyl-tRNA hydrolase.